A 557-amino-acid polypeptide reads, in one-letter code: Pre-mRNA-processing protein 45 (557 aa).

Disordered stretches follow at residues 1-32 (MALLSEELSSILPNPDFDDEEEDYVERETSHA), 208-243 (EQDPMEPPKFRHKKVPRGPPSPPPPVLHSPPRKVSA), and 316-444 (MAEK…MSSD). Residues 16–25 (DFDDEEEDYV) show a composition bias toward acidic residues. A compositionally biased stretch (pro residues) spans 224–235 (RGPPSPPPPVLH). A phosphoserine mark is found at Ser-228 and Ser-236. Residues 316 to 327 (MAEKEKQEKEQR) are compositionally biased toward basic and acidic residues. Ser-376 carries the phosphoserine modification. Residues 386-430 (EAFRRRQELRRERRRQAEKDLRLSRMGAEKRAKLAEKDRPRDVAE) show a composition bias toward basic and acidic residues.

The protein belongs to the SNW family. In terms of assembly, homodimer. Interacts with cyp1 and the small 23 kDa subunit of the splicing factor U2AF (u2af23). Belongs to the 40S cdc5-associated complex (or cwf complex), a spliceosome sub-complex reminiscent of a late-stage spliceosome composed of the U2, U5 and U6 snRNAs and at least brr2, cdc5, cwf2/prp3, cwf3/syf1, cwf4/syf3, cwf5/ecm2, spp42/cwf6, cwf7/spf27, cwf8, cwf9, cwf10, cwf11, cwf12, prp45/cwf13, cwf14, cwf15, cwf16, cwf17, cwf18, cwf19, cwf20, cwf21, cwf22, cwf23, cwf24, cwf25, cwf26, cyp7/cwf27, cwf28, cwf29/ist3, lea1, msl1, prp5/cwf1, prp10, prp12/sap130, prp17, prp22, sap61, sap62, sap114, sap145, slu7, smb1, smd1, smd3, smf1, smg1 and syf2.

It is found in the nucleus. Its function is as follows. Involved in pre-mRNA splicing. In Schizosaccharomyces pombe (strain 972 / ATCC 24843) (Fission yeast), this protein is Pre-mRNA-processing protein 45 (prp45).